Reading from the N-terminus, the 1341-residue chain is Subtilisin-like protease 2 (1341 aa).

A signal peptide spans 1-18 (MLNIIYVVSLILIKFIFY). Residues 19–686 (KECNNNNNYY…KLYNNKYSFL (668 aa)) constitute a propeptide, inhibition peptide. 2 disordered regions span residues 85–107 (EKKT…EKKK) and 143–171 (ADVS…NYKN). 5 N-linked (GlcNAc...) asparagine glycosylation sites follow: N165, N343, N449, N453, and N492. The tract at residues 415–474 (KKSKKEKENTQQKGGNNPNVDINILNNNNNNNNNNNSNNNSNSMNDEEINYNNNNNNKES) is disordered. Low complexity predominate over residues 430–474 (NNPNVDINILNNNNNNNNNNNSNNNSNSMNDEEINYNNNNNNKES). The segment at 499–530 (IYHNKNDNSYKNKKEGTGKNNDNNDPNNNNNK) is disordered. Basic and acidic residues predominate over residues 502 to 515 (NKNDNSYKNKKEGT). The segment covering 517–530 (KNNDNNDPNNNNNK) has biased composition (low complexity). N550, N641, and N728 each carry an N-linked (GlcNAc...) asparagine glycan. Over 687-1136 (NKFLNIEPLI…LYNLYEYDSH (450 aa)) the chain is Extracellular. A Peptidase S8 domain is found at 726–1019 (TWNLSIIRVF…DSLVNAEGAV (294 aa)). Active-site charge relay system residues include D754 and H797. N-linked (GlcNAc...) asparagine glycosylation is found at N820, N856, N892, and N950. The Charge relay system role is filled by S960. N-linked (GlcNAc...) asparagine glycosylation is found at N1009 and N1105. A helical transmembrane segment spans residues 1137–1157 (YLLASVILFFLALLSIFVGMI). Topologically, residues 1158-1341 (YMKSRKHSDK…MNQLDDMFMK (184 aa)) are cytoplasmic.

The protein belongs to the peptidase S8 family. In terms of processing, proteolytically cleaved at the N-terminus to generate a 74kDa intermediate which is further processed into a 72kDa form. The first maturation cleavage is autocatalytic, occurs in the ER and is necessary for the subsequent SUB2 trafficking to the microneme. The second cleavage may be mediated by PMX/plasmepsin X.

It localises to the cell membrane. It is found in the cytoplasmic vesicle. Its subcellular location is the secretory vesicle. The protein resides in the microneme membrane. It carries out the reaction Hydrolysis of proteins with broad specificity for peptide bonds, and a preference for a large uncharged residue in P1. Hydrolyzes peptide amides.. Activation may be calcium-dependent. Inhibited by the non-covalent interaction with the cleaved propeptide. Its function is as follows. Serine protease which plays an essential role in the shedding of AMA1, MSP1 and MSP7 from the surface of the invading merozoite; this step is essential for productive invasion and the release of the adhesion between the erythrocyte and the merozoite. May cleave TRAMP/PTTRAMP, thereby shedding TRAMP from the merozoite surface during erythrocyte invasion. In Plasmodium falciparum (isolate 3D7), this protein is Subtilisin-like protease 2.